We begin with the raw amino-acid sequence, 177 residues long: FMRFamide-like neuropeptides 7 (177 aa).

A signal peptide spans 1 to 19 (MLGSRFLLLALGLLVLVLA). Positions 20–49 (EESAEQQVQEPTELEKSGEQLSEEDLIDEQ) are excised as a propeptide. The tract at residues 25–106 (QQVQEPTELE…RSSMVRFGKR (82 aa)) is disordered. Phenylalanine amide occurs at positions 62, 75, 89, 103, 117, and 130. At leucine 143 the chain carries Leucine amide. Phenylalanine 157 is subject to Phenylalanine amide. Residues 161-177 (SMEFEMQSNEKNIEDSE) constitute a propeptide that is removed on maturation.

Belongs to the FARP (FMRFamide related peptide) family. In terms of tissue distribution, expressed in the ASI sensory neurons, the ALA interneuron and the AVG interneuron from where secretion occurs. Expression in the ASI neurons is necessary and sufficient to maintain serotonin-induced fat loss.

The protein resides in the secreted. In terms of biological role, FMRFamide-like neuropeptides. Stimulates serotonin-induced fat loss by binding to and activating the npr-22 receptor which leads to induction of the atgl-1 lipase and subsequent fat loss. Together with atfs-1, negatively regulates the expression of the transcription regulator hlh-11, to promote expression of atgl-1, and thus atgl-1-dependent fat oxidation in response to mitochondrial stress. Functionally, TPMQRSSMVRF-amide: Acts as a ligand for the npr-22 receptor in vitro. SPMQRSSMVRF-amide: Acts as a ligand for the npr-22 receptor in vitro. Its function is as follows. Acts as a ligand for the npr-22 receptor in vitro. This is FMRFamide-like neuropeptides 7 from Caenorhabditis elegans.